The following is an 864-amino-acid chain: N-alpha-acetyltransferase 16, NatA auxiliary subunit (864 aa).

TPR repeat units lie at residues 46-79 (GETL…DVRS), 80-113 (HVCW…DKDN), 148-184 (RASW…PPNK), 224-257 (LLVE…NAEN), 374-407 (IWVQ…TPTL), 408-441 (IELF…DTAD), and 485-514 (MWFE…VERH). The tract at residues 594-646 (KMLSKQRRAQKKAKVEEERKHTERERQQKNQKKKREEEEEVTSGHKEELIPEK) is disordered. A compositionally biased stretch (basic residues) spans 595 to 605 (MLSKQRRAQKK). 2 stretches are compositionally biased toward basic and acidic residues: residues 606–621 (AKVE…ERQQ) and 635–646 (TSGHKEELIPEK).

Component of the N-terminal acetyltransferase A (NatA) complex composed of NAA10 and NAA16. In terms of tissue distribution, highest levels in the kidney and testes. Moderate expression in the liver, thymus and skin.

Its function is as follows. Auxillary subunit of the N-terminal acetyltransferase A (NatA) complex which displays alpha (N-terminal) acetyltransferase activity. The chain is N-alpha-acetyltransferase 16, NatA auxiliary subunit (Naa16) from Mus musculus (Mouse).